A 156-amino-acid polypeptide reads, in one-letter code: ATP synthase subunit b (156 aa).

A helical transmembrane segment spans residues 7–27 (LIGQTVAFIIFVWFCMKFVWP).

It belongs to the ATPase B chain family. In terms of assembly, F-type ATPases have 2 components, F(1) - the catalytic core - and F(0) - the membrane proton channel. F(1) has five subunits: alpha(3), beta(3), gamma(1), delta(1), epsilon(1). F(0) has three main subunits: a(1), b(2) and c(10-14). The alpha and beta chains form an alternating ring which encloses part of the gamma chain. F(1) is attached to F(0) by a central stalk formed by the gamma and epsilon chains, while a peripheral stalk is formed by the delta and b chains.

It localises to the cell inner membrane. Its function is as follows. F(1)F(0) ATP synthase produces ATP from ADP in the presence of a proton or sodium gradient. F-type ATPases consist of two structural domains, F(1) containing the extramembraneous catalytic core and F(0) containing the membrane proton channel, linked together by a central stalk and a peripheral stalk. During catalysis, ATP synthesis in the catalytic domain of F(1) is coupled via a rotary mechanism of the central stalk subunits to proton translocation. In terms of biological role, component of the F(0) channel, it forms part of the peripheral stalk, linking F(1) to F(0). The protein is ATP synthase subunit b of Shewanella baltica (strain OS155 / ATCC BAA-1091).